Consider the following 159-residue polypeptide: Large ribosomal subunit protein mL43 (159 aa).

The interval 123–159 (SPSIQGQWHPFTNKPTALGGLRPREVQNPAPTQRPAQ) is disordered.

It belongs to the mitochondrion-specific ribosomal protein mL43 family. In terms of assembly, component of the mitochondrial ribosome large subunit (39S) which comprises a 16S rRNA and about 50 distinct proteins.

The protein localises to the mitochondrion. The polypeptide is Large ribosomal subunit protein mL43 (MRPL43) (Bos taurus (Bovine)).